A 359-amino-acid polypeptide reads, in one-letter code: Nicotinate-nucleotide--dimethylbenzimidazole phosphoribosyltransferase (359 aa).

Glutamate 318 functions as the Proton acceptor in the catalytic mechanism.

This sequence belongs to the CobT family. Homodimer.

It carries out the reaction 5,6-dimethylbenzimidazole + nicotinate beta-D-ribonucleotide = alpha-ribazole 5'-phosphate + nicotinate + H(+). It participates in nucleoside biosynthesis; alpha-ribazole biosynthesis; alpha-ribazole from 5,6-dimethylbenzimidazole: step 1/2. Catalyzes the synthesis of alpha-ribazole-5'-phosphate from nicotinate mononucleotide (NAMN) and 5,6-dimethylbenzimidazole (DMB). This Escherichia coli O157:H7 protein is Nicotinate-nucleotide--dimethylbenzimidazole phosphoribosyltransferase.